The following is a 320-amino-acid chain: MSTSSAQYSPDLVRAYLQEIGRVRLLTAEEELCFGRQVQRLMMLLDAQTELRDRLGHEPSKEEWAAAVDLNLEDLDRQIEQGQRAKRKMIEANLRLVVSIAKKYQKRHMEFLDLIQEGTLGLERGVEKFDPSKGYKFSTYAYWWIRQAITRAIAQQSRTIRLPIHITEKLNKLKKTQRELSQQLGRSATASELAEVLELPLEQVREYIQMNRQPVSLDVKVGDSQDTELQELLEDEQSSPSDYVEQESLRRDLRNLMAELTPQQQAVIALRYGLDEGDSLSLAKVGERLNISRERVRKLERQAMDHLRRRSRLLAEYAAS.

The interval 89–159 (MIEANLRLVV…TRAIAQQSRT (71 aa)) is sigma-70 factor domain-2. The short motif at 113-116 (DLIQ) is the Interaction with polymerase core subunit RpoC element. The interval 168–243 (EKLNKLKKTQ…EDEQSSPSDY (76 aa)) is sigma-70 factor domain-3. The segment at 256–310 (LMAELTPQQQAVIALRYGLDEGDSLSLAKVGERLNISRERVRKLERQAMDHLRRR) is sigma-70 factor domain-4. A DNA-binding region (H-T-H motif) is located at residues 282 to 301 (LAKVGERLNISRERVRKLER).

This sequence belongs to the sigma-70 factor family.

It is found in the cytoplasm. Functionally, sigma factors are initiation factors that promote the attachment of RNA polymerase to specific initiation sites and are then released. This sigma factor is a component of the biological clock pathway that affects the circadian expression of a subset of genes in this bacterium. In Synechococcus elongatus (strain ATCC 33912 / PCC 7942 / FACHB-805) (Anacystis nidulans R2), this protein is RNA polymerase sigma factor SigA2 (sigA2).